The primary structure comprises 880 residues: Alanine--tRNA ligase (880 aa).

Residues His-567, His-571, Cys-669, and His-673 each contribute to the Zn(2+) site.

The protein belongs to the class-II aminoacyl-tRNA synthetase family. Zn(2+) serves as cofactor.

Its subcellular location is the cytoplasm. It catalyses the reaction tRNA(Ala) + L-alanine + ATP = L-alanyl-tRNA(Ala) + AMP + diphosphate. Functionally, catalyzes the attachment of alanine to tRNA(Ala) in a two-step reaction: alanine is first activated by ATP to form Ala-AMP and then transferred to the acceptor end of tRNA(Ala). Also edits incorrectly charged Ser-tRNA(Ala) and Gly-tRNA(Ala) via its editing domain. This chain is Alanine--tRNA ligase, found in Syntrophomonas wolfei subsp. wolfei (strain DSM 2245B / Goettingen).